We begin with the raw amino-acid sequence, 119 residues long: Large ribosomal subunit protein uL22 (119 aa).

Belongs to the universal ribosomal protein uL22 family. As to quaternary structure, part of the 50S ribosomal subunit.

This protein binds specifically to 23S rRNA; its binding is stimulated by other ribosomal proteins, e.g. L4, L17, and L20. It is important during the early stages of 50S assembly. It makes multiple contacts with different domains of the 23S rRNA in the assembled 50S subunit and ribosome. Its function is as follows. The globular domain of the protein is located near the polypeptide exit tunnel on the outside of the subunit, while an extended beta-hairpin is found that lines the wall of the exit tunnel in the center of the 70S ribosome. The chain is Large ribosomal subunit protein uL22 from Microcystis aeruginosa (strain NIES-843 / IAM M-2473).